The sequence spans 274 residues: Thiamine kinase (274 aa).

This sequence belongs to the thiamine kinase family.

It carries out the reaction thiamine + ATP = thiamine phosphate + ADP + H(+). It participates in cofactor biosynthesis; thiamine diphosphate biosynthesis; thiamine phosphate from thiamine: step 1/1. Functionally, catalyzes the ATP-dependent phosphorylation of thiamine to thiamine phosphate. Is involved in thiamine salvage. The polypeptide is Thiamine kinase (Salmonella typhimurium (strain LT2 / SGSC1412 / ATCC 700720)).